A 513-amino-acid chain; its full sequence is 2-isopropylmalate synthase (513 aa).

The Pyruvate carboxyltransferase domain occupies 5-268 (LIIFDTTLRD…DLRVDTSQIV (264 aa)). Residues Asp14, His202, His204, and Asn239 each contribute to the Mn(2+) site. The regulatory domain stretch occupies residues 394 to 513 (RLLALSQHSE…SKAERVAAQG (120 aa)).

Belongs to the alpha-IPM synthase/homocitrate synthase family. LeuA type 1 subfamily. In terms of assembly, homodimer. Requires Mn(2+) as cofactor.

The protein localises to the cytoplasm. The catalysed reaction is 3-methyl-2-oxobutanoate + acetyl-CoA + H2O = (2S)-2-isopropylmalate + CoA + H(+). Its pathway is amino-acid biosynthesis; L-leucine biosynthesis; L-leucine from 3-methyl-2-oxobutanoate: step 1/4. Functionally, catalyzes the condensation of the acetyl group of acetyl-CoA with 3-methyl-2-oxobutanoate (2-ketoisovalerate) to form 3-carboxy-3-hydroxy-4-methylpentanoate (2-isopropylmalate). This is 2-isopropylmalate synthase from Leptothrix cholodnii (strain ATCC 51168 / LMG 8142 / SP-6) (Leptothrix discophora (strain SP-6)).